The chain runs to 157 residues: Transcriptional repressor NrdR (157 aa).

A zinc finger lies at 3 to 34 (CPFCSATDTKVIDSRLVADGHQVRRRRECLLC). Residues 49-139 (PRVVKQDGSR…VYRAFEDVSE (91 aa)) form the ATP-cone domain.

Belongs to the NrdR family. Requires Zn(2+) as cofactor.

Negatively regulates transcription of bacterial ribonucleotide reductase nrd genes and operons by binding to NrdR-boxes. This chain is Transcriptional repressor NrdR, found in Shewanella loihica (strain ATCC BAA-1088 / PV-4).